A 513-amino-acid polypeptide reads, in one-letter code: 2-isopropylmalate synthase (513 aa).

Residues 5 to 268 (LIIFDTTLRD…DIGVDTTQIV (264 aa)) enclose the Pyruvate carboxyltransferase domain. Residues aspartate 14, histidine 202, histidine 204, and asparagine 239 each coordinate Mn(2+). A regulatory domain region spans residues 394–513 (RFISLSQRSE…KAVQKINPQI (120 aa)).

Belongs to the alpha-IPM synthase/homocitrate synthase family. LeuA type 1 subfamily. In terms of assembly, homodimer. The cofactor is Mn(2+).

It is found in the cytoplasm. It catalyses the reaction 3-methyl-2-oxobutanoate + acetyl-CoA + H2O = (2S)-2-isopropylmalate + CoA + H(+). Its pathway is amino-acid biosynthesis; L-leucine biosynthesis; L-leucine from 3-methyl-2-oxobutanoate: step 1/4. Catalyzes the condensation of the acetyl group of acetyl-CoA with 3-methyl-2-oxobutanoate (2-ketoisovalerate) to form 3-carboxy-3-hydroxy-4-methylpentanoate (2-isopropylmalate). In Cupriavidus necator (strain ATCC 17699 / DSM 428 / KCTC 22496 / NCIMB 10442 / H16 / Stanier 337) (Ralstonia eutropha), this protein is 2-isopropylmalate synthase.